Reading from the N-terminus, the 204-residue chain is Double homeobox protein A (204 aa).

Residues 15–74 (HRRCRTKFTEEQLKILINTFNQKPYPGYATKQKLALEINTEESRIQIWFQNRRARHGFQK) constitute a DNA-binding region (homeobox 1). 2 disordered regions span residues 73–101 (QKRPEAETLESSQSQGQDQPGVEFQSREA) and 163–204 (EPVA…ARTW). Polar residues predominate over residues 81–90 (LESSQSQGQD). A DNA-binding region (homeobox 2) is located at residues 101–160 (ARRCRTTYSASQLHTLIKAFMKNPYPGIDSREELAKEIGVPESRVQIWFQNRRSRLLLQR). A compositionally biased stretch (polar residues) spans 184–197 (EDTQNGTNFTSDSH).

Belongs to the paired homeobox family. In terms of tissue distribution, expressed in embryonic stem cells.

The protein localises to the nucleus. In terms of biological role, transcription factor that acts as a repressor. The sequence is that of Double homeobox protein A from Homo sapiens (Human).